A 246-amino-acid polypeptide reads, in one-letter code: Acetoacetate decarboxylase (246 aa).

K116 functions as the Schiff-base intermediate with acetoacetate in the catalytic mechanism.

Belongs to the ADC family.

The catalysed reaction is acetoacetate + H(+) = acetone + CO2. Its function is as follows. Catalyzes the conversion of acetoacetate to acetone and carbon dioxide. This Burkholderia multivorans (strain ATCC 17616 / 249) protein is Acetoacetate decarboxylase.